The following is a 383-amino-acid chain: Probable endoplasmic reticulum-Golgi intermediate compartment protein 3 (383 aa).

Over 1–26 (MLISQLKKFDAYPKTVDDFRVKTYTG) the chain is Cytoplasmic. A helical transmembrane segment spans residues 27-47 (AIVSIIGGVFILWLFFSQVTL). Residues 48–347 (YFSTDIHHEL…GKSFASFLTN (300 aa)) are Lumenal-facing. The helical transmembrane segment at 348–368 (VCAIIGGVFTVFGIFDSFIYY) threads the bilayer. The Cytoplasmic segment spans residues 369 to 383 (STKNLQKKIDLGKTF).

It belongs to the ERGIC family.

The protein resides in the endoplasmic reticulum-Golgi intermediate compartment membrane. Its subcellular location is the golgi apparatus. The protein localises to the cis-Golgi network membrane. It is found in the endoplasmic reticulum membrane. Possible role in transport between endoplasmic reticulum and Golgi. The chain is Probable endoplasmic reticulum-Golgi intermediate compartment protein 3 (ergic3) from Dictyostelium discoideum (Social amoeba).